Consider the following 327-residue polypeptide: Glycerol-3-phosphate dehydrogenase [NAD(P)+] (327 aa).

3 residues coordinate NADPH: Trp-15, Arg-35, and Lys-109. 3 residues coordinate sn-glycerol 3-phosphate: Lys-109, Gly-137, and Ser-139. Residue Ala-141 participates in NADPH binding. Sn-glycerol 3-phosphate is bound by residues Lys-192, Asp-245, Ser-255, Arg-256, and Asn-257. Residue Lys-192 is the Proton acceptor of the active site. NADPH is bound at residue Arg-256. The NADPH site is built by Leu-275 and Glu-277.

Belongs to the NAD-dependent glycerol-3-phosphate dehydrogenase family.

Its subcellular location is the cytoplasm. It catalyses the reaction sn-glycerol 3-phosphate + NAD(+) = dihydroxyacetone phosphate + NADH + H(+). It carries out the reaction sn-glycerol 3-phosphate + NADP(+) = dihydroxyacetone phosphate + NADPH + H(+). It participates in membrane lipid metabolism; glycerophospholipid metabolism. Its function is as follows. Catalyzes the reduction of the glycolytic intermediate dihydroxyacetone phosphate (DHAP) to sn-glycerol 3-phosphate (G3P), the key precursor for phospholipid synthesis. This chain is Glycerol-3-phosphate dehydrogenase [NAD(P)+], found in Chelativorans sp. (strain BNC1).